We begin with the raw amino-acid sequence, 39 residues long: MASTGRIPLWIIATFGGIAALTVVGLFIYGSYSGIGSAL.

The helical transmembrane segment at 9–29 (LWIIATFGGIAALTVVGLFIY) threads the bilayer.

The protein belongs to the PsbJ family. As to quaternary structure, PSII is composed of 1 copy each of membrane proteins PsbA, PsbB, PsbC, PsbD, PsbE, PsbF, PsbH, PsbI, PsbJ, PsbK, PsbL, PsbM, PsbT, PsbX, PsbY, PsbZ, Psb30/Ycf12, at least 3 peripheral proteins of the oxygen-evolving complex and a large number of cofactors. It forms dimeric complexes.

Its subcellular location is the plastid. It localises to the chloroplast thylakoid membrane. In terms of biological role, one of the components of the core complex of photosystem II (PSII). PSII is a light-driven water:plastoquinone oxidoreductase that uses light energy to abstract electrons from H(2)O, generating O(2) and a proton gradient subsequently used for ATP formation. It consists of a core antenna complex that captures photons, and an electron transfer chain that converts photonic excitation into a charge separation. In Guillardia theta (Cryptophyte), this protein is Photosystem II reaction center protein J.